A 393-amino-acid polypeptide reads, in one-letter code: Acetylornithine aminotransferase (393 aa).

Pyridoxal 5'-phosphate is bound by residues 105 to 106 (GA) and F138. R141 is a binding site for N(2)-acetyl-L-ornithine. 224–227 (DEVQ) serves as a coordination point for pyridoxal 5'-phosphate. At K253 the chain carries N6-(pyridoxal phosphate)lysine. S281 contributes to the N(2)-acetyl-L-ornithine binding site. Position 282 (T282) interacts with pyridoxal 5'-phosphate.

Belongs to the class-III pyridoxal-phosphate-dependent aminotransferase family. ArgD subfamily. In terms of assembly, homodimer. The cofactor is pyridoxal 5'-phosphate.

It is found in the cytoplasm. The catalysed reaction is N(2)-acetyl-L-ornithine + 2-oxoglutarate = N-acetyl-L-glutamate 5-semialdehyde + L-glutamate. It functions in the pathway amino-acid biosynthesis; L-arginine biosynthesis; N(2)-acetyl-L-ornithine from L-glutamate: step 4/4. The chain is Acetylornithine aminotransferase from Haemophilus ducreyi (strain 35000HP / ATCC 700724).